A 486-amino-acid polypeptide reads, in one-letter code: Cardiolipin synthase A (486 aa).

2 helical membrane passes run 3–23 (TFYT…IAGV) and 38–58 (MAWL…YLSF). PLD phosphodiesterase domains are found at residues 219–246 (MDLR…VDPR) and 399–426 (EGGL…DMRS). Active-site residues include His-224, Lys-226, Asp-231, His-404, Lys-406, and Asp-411.

Belongs to the phospholipase D family. Cardiolipin synthase subfamily. ClsA sub-subfamily.

Its subcellular location is the cell inner membrane. It carries out the reaction 2 a 1,2-diacyl-sn-glycero-3-phospho-(1'-sn-glycerol) = a cardiolipin + glycerol. Functionally, catalyzes the reversible phosphatidyl group transfer from one phosphatidylglycerol molecule to another to form cardiolipin (CL) (diphosphatidylglycerol) and glycerol. This is Cardiolipin synthase A from Yersinia pseudotuberculosis serotype O:3 (strain YPIII).